Consider the following 87-residue polypeptide: Small ribosomal subunit protein bS20 (87 aa).

It belongs to the bacterial ribosomal protein bS20 family.

In terms of biological role, binds directly to 16S ribosomal RNA. The chain is Small ribosomal subunit protein bS20 from Corynebacterium jeikeium (strain K411).